Consider the following 517-residue polypeptide: Tyrosine 3-monooxygenase (517 aa).

Residue serine 33 is modified to Phosphoserine; by PKA. 3 residues coordinate Fe cation: histidine 345, histidine 350, and glutamate 390.

Belongs to the biopterin-dependent aromatic amino acid hydroxylase family. It depends on Fe(2+) as a cofactor.

It localises to the cytoplasm. The protein localises to the perinuclear region. The protein resides in the cell projection. It is found in the axon. The enzyme catalyses (6R)-L-erythro-5,6,7,8-tetrahydrobiopterin + L-tyrosine + O2 = (4aS,6R)-4a-hydroxy-L-erythro-5,6,7,8-tetrahydrobiopterin + L-dopa. It participates in catecholamine biosynthesis; dopamine biosynthesis; dopamine from L-tyrosine: step 1/2. With respect to regulation, phosphorylation leads to an increase in the catalytic activity. In terms of biological role, involved in the synthesis of catecholamines, such as dopamine. Has a role in serotonin signaling. Required for normal explorative and foraging behavior. This Caenorhabditis briggsae protein is Tyrosine 3-monooxygenase (cat-2).